The primary structure comprises 511 residues: Fas-activated serine/threonine kinase (511 aa).

In terms of domain architecture, RAP spans 439 to 497 (VVLMLRERWHFCRDGRVLLGSRALRERHLGLMGYQLLPLPFEELESQRGLPQLKSYLRQ).

Belongs to the FAST protein kinase family. In terms of assembly, interacts with TIA1; the interactions leads to TIA1 phosphorylation. Interacts with TIAR. Autophosphorylated on serine/threonine residues. Activated by dephosphorylation.

The protein resides in the mitochondrion matrix. The enzyme catalyses L-seryl-[Fas-activated protein] + ATP = O-phospho-L-seryl-[Fas-activated protein] + ADP + H(+). The catalysed reaction is L-threonyl-[Fas-activated protein] + ATP = O-phospho-L-threonyl-[Fas-activated protein] + ADP + H(+). It carries out the reaction L-seryl-[protein] + ATP = O-phospho-L-seryl-[protein] + ADP + H(+). It catalyses the reaction L-threonyl-[protein] + ATP = O-phospho-L-threonyl-[protein] + ADP + H(+). In terms of biological role, phosphorylates the splicing regulator TIA1, thereby promoting the inclusion of FAS exon 6, which leads to an mRNA encoding a pro-apoptotic form of the receptor. Required for the biogenesis of some mitochondrial-encoded mRNAs, specifically stabilizes ND6 (NADH dehydrogenase complex subunit 6) mRNA, and regulates its levels. In Mus musculus (Mouse), this protein is Fas-activated serine/threonine kinase (Fastk).